Here is a 1840-residue protein sequence, read N- to C-terminus: Neurexin 1 (1840 aa).

Residues 1 to 50 (MKAPHSATYQDNYADAAMTARTRPSMDMDQQRNRNQAELRLLPAQRTSTS) form a disordered region. The Extracellular portion of the chain corresponds to 1 to 1696 (MKAPHSATYQ…NSIEEERTAM (1696 aa)). A compositionally biased stretch (basic and acidic residues) spans 24-37 (PSMDMDQQRNRNQA). The Laminin G-like 1 domain maps to 104–289 (GFQLDGSQNS…RDIKCGDVPC (186 aa)). Positions 309-347 (TTDACERNDPCQHGGICISTDSGPICECRNLEYDGQYCE) constitute an EGF-like 1 domain. Intrachain disulfides connect cysteine 313–cysteine 325, cysteine 319–cysteine 334, cysteine 336–cysteine 346, cysteine 511–cysteine 547, cysteine 710–cysteine 739, cysteine 746–cysteine 757, cysteine 751–cysteine 766, and cysteine 768–cysteine 778. 2 Laminin G-like domains span residues 352–547 (PSEA…EYQC) and 554–739 (DPVT…KPSC). The 38-residue stretch at 742–779 (QANVCNGNPCLNGGTCLEGWNRPICDCSATLYGGPTCG) folds into the EGF-like 2 domain. Laminin G-like domains follow at residues 784-964 (TLAF…LPSA) and 982-1158 (HAAT…VSGC). Intrachain disulfides connect cysteine 1130/cysteine 1158, cysteine 1164/cysteine 1175, cysteine 1169/cysteine 1184, and cysteine 1186/cysteine 1196. Positions 1160-1197 (GPTKCSQNACANRGNCVQQWNAYACECDMTSYTGPTCY) constitute an EGF-like 3 domain. One can recognise a Laminin G-like 6 domain in the interval 1201 to 1416 (IAYEFGNNKG…LIFSGAGSGC (216 aa)). A disordered region spans residues 1411–1651 (GAGSGCRGDD…DEHHPLPPLP (241 aa)). Low complexity predominate over residues 1447 to 1472 (QTTTSQQGNSLSTGGSSSGGVITNGT). The span at 1491–1527 (TTEQFTSTSTARGSESNNEMVTITTTGRSDVTTEQHQ) shows a compositional bias: polar residues. Low complexity predominate over residues 1528–1600 (GSSSSSSSGS…TTTTTTTTQA (73 aa)). The segment covering 1632–1646 (RNDHDRMQLPDEHHP) has biased composition (basic and acidic residues). A helical transmembrane segment spans residues 1697-1717 (IIGIVAGILIAVVLVILLVLW). Residues 1718–1840 (LKSNGDRGYK…DSKDVKEWYV (123 aa)) are Cytoplasmic-facing. The segment at 1737-1840 (GSHNPNAALL…DSKDVKEWYV (104 aa)) is disordered. The span at 1747–1757 (GNTSTNGSYHQ) shows a compositional bias: polar residues. Over residues 1774–1787 (QQQHHAQQQMHNGH) the composition is skewed to low complexity. A compositionally biased stretch (gly residues) spans 1788-1813 (NGNGNGGGGGGGGMMSSGSGSLGYGS). 2 residues coordinate Zn(2+): aspartate 1831 and aspartate 1834. The segment covering 1831-1840 (DSKDVKEWYV) has biased composition (basic and acidic residues). The PDZ domain binding signature appears at 1837-1840 (EWYV).

The protein belongs to the neurexin family. As to quaternary structure, interacts (via C-terminal PDZ binding motif) with CASK (via PDZ domain). Interacts (via cytoplasmic domain) with apolpp/ApoLI; the interaction supports apolpp/ApoLI protein stability. Interact (via cytoplasmic domain) with Spn/Spinophilin. Interacts with RhoGAP100F/Syd-1 (via PDZ domain); RhoGAP100F/Syd-1 may recruit Nrx-1 to the presynaptic active zone. Expressed in brain, with expression in medulla, lamina, lobula, lobula plate, mushroom body and antennal lobe, and in retina (at protein level). Expressed in rabdomere of photoreceptor cells (at protein level).

The protein localises to the synaptic cell membrane. It is found in the presynaptic cell membrane. Its subcellular location is the postsynaptic cell membrane. Neuronal cell adhesion protein involved in synapse formation, development of synaptic active zones, synaptic regulation and visual function. Plays a role in cell adhesion between the pre- and the postsynaptic cell. Required for proper proliferation of synaptic boutons during larval development, a process necessary for coordinated matching of pre-and postsynaptic compartments. Promotes presynaptic active zone formation and neurotransmitter release. Spn/Spinophilin fine-tunes nrx-1/nlg1 signaling at the pre-synapse to control active zone number and functionality and thereby optimizing action potential-induced exocytosis. Required for synapse formation in central nervous system. By regulating synapse formation, may play a role in larval associative learning. Together with RhoGAP100F/syd-1, controls synapse formation at the neuromuscular junction. Essential for synaptic vesicle cycling, which plays critical roles in neurotransmission at neuromuscular junctions (NMJ). Regulated and restricts formation of glutamate receptor clusters. Mediates retinoid transport and subsequent rhodopsin maturation and may regulate lipoprotein function; thereby playing a role in vision. Regulates sleep, circadian rhythm and synaptic plasticity. Together with CASK, required for locomotion. The polypeptide is Neurexin 1 (Drosophila melanogaster (Fruit fly)).